The sequence spans 241 residues: Probable septum site-determining protein MinC (241 aa).

It belongs to the MinC family. Interacts with MinD and FtsZ.

Its function is as follows. Cell division inhibitor that blocks the formation of polar Z ring septums. Rapidly oscillates between the poles of the cell to destabilize FtsZ filaments that have formed before they mature into polar Z rings. Prevents FtsZ polymerization. The sequence is that of Probable septum site-determining protein MinC from Rhizobium rhizogenes (strain K84 / ATCC BAA-868) (Agrobacterium radiobacter).